We begin with the raw amino-acid sequence, 364 residues long: DNA polymerase IV (364 aa).

The 181-residue stretch at 7-187 folds into the UmuC domain; it reads IIHVDMDAFY…LPVNRVPGVG (181 aa). Residues D11 and D105 each coordinate Mg(2+). The active site involves E106.

It belongs to the DNA polymerase type-Y family. In terms of assembly, monomer. It depends on Mg(2+) as a cofactor.

The protein localises to the cytoplasm. It carries out the reaction DNA(n) + a 2'-deoxyribonucleoside 5'-triphosphate = DNA(n+1) + diphosphate. In terms of biological role, poorly processive, error-prone DNA polymerase involved in untargeted mutagenesis. Copies undamaged DNA at stalled replication forks, which arise in vivo from mismatched or misaligned primer ends. These misaligned primers can be extended by PolIV. Exhibits no 3'-5' exonuclease (proofreading) activity. May be involved in translesional synthesis, in conjunction with the beta clamp from PolIII. This is DNA polymerase IV from Stenotrophomonas maltophilia (strain K279a).